A 241-amino-acid polypeptide reads, in one-letter code: Ribonuclease PH (241 aa).

Phosphate-binding positions include Arg-89 and 127–129 (GTR).

Belongs to the RNase PH family. As to quaternary structure, homohexameric ring arranged as a trimer of dimers.

It carries out the reaction tRNA(n+1) + phosphate = tRNA(n) + a ribonucleoside 5'-diphosphate. In terms of biological role, phosphorolytic 3'-5' exoribonuclease that plays an important role in tRNA 3'-end maturation. Removes nucleotide residues following the 3'-CCA terminus of tRNAs; can also add nucleotides to the ends of RNA molecules by using nucleoside diphosphates as substrates, but this may not be physiologically important. Probably plays a role in initiation of 16S rRNA degradation (leading to ribosome degradation) during starvation. In Xanthomonas euvesicatoria pv. vesicatoria (strain 85-10) (Xanthomonas campestris pv. vesicatoria), this protein is Ribonuclease PH.